The chain runs to 72 residues: Translation initiation factor IF-1 (72 aa).

An S1-like domain is found at 1 to 72; sequence MAKEESIKMN…SKGRITYRAR (72 aa).

Belongs to the IF-1 family. In terms of assembly, component of the 30S ribosomal translation pre-initiation complex which assembles on the 30S ribosome in the order IF-2 and IF-3, IF-1 and N-formylmethionyl-tRNA(fMet); mRNA recruitment can occur at any time during PIC assembly.

Its subcellular location is the cytoplasm. Functionally, one of the essential components for the initiation of protein synthesis. Stabilizes the binding of IF-2 and IF-3 on the 30S subunit to which N-formylmethionyl-tRNA(fMet) subsequently binds. Helps modulate mRNA selection, yielding the 30S pre-initiation complex (PIC). Upon addition of the 50S ribosomal subunit IF-1, IF-2 and IF-3 are released leaving the mature 70S translation initiation complex. The polypeptide is Translation initiation factor IF-1 (Alkalilimnicola ehrlichii (strain ATCC BAA-1101 / DSM 17681 / MLHE-1)).